Consider the following 115-residue polypeptide: Toxin CSTX-9 (115 aa).

Residues Met-1–Ala-20 form the signal peptide. The propeptide occupies Glu-21–Arg-47. Cystine bridges form between Cys-53/Cys-68, Cys-60/Cys-77, Cys-67/Cys-95, and Cys-79/Cys-93.

The protein belongs to the neurotoxin 19 (CSTX) family. In terms of assembly, monomer. Interacts with CSTX-13 (AC P83919) (Kd=370 nM), but does not interact with CSTX-1 (AC P81694). As to expression, expressed by the venom gland.

The protein localises to the secreted. The protein resides in the target cell membrane. Synergistic toxin that induces or increases a cytolytic effect when combined with CSTX-1 (AC P81694) or CSTX-13 (AC P83919). Potassium ions and M-ctenitoxin-Cs1a (AC P83619) have also an effect on its activity. When alone, has no insecticidal activity. The chain is Toxin CSTX-9 from Cupiennius salei (American wandering spider).